Reading from the N-terminus, the 85-residue chain is Serine protease inhibitor Cvsi-2 (85 aa).

The first 18 residues, 1–18 (MKVAVVVALLCFVCYTAA), serve as a signal peptide directing secretion.

In terms of processing, contains 6 disulfide bonds. In terms of tissue distribution, detected in hemolymph (at protein level). Within the digestive gland expression is limited to the basophil cells of the digestive diverticula.

It is found in the secreted. In terms of biological role, slow-binding inhibitor of serine proteases. The inhibitor rapidly binds to the protease forming a weak enzyme-inhibitor complex, and this is followed by a slow isomerization forming a tight-binding enzyme-inhibitor complex. Active against subtilisin A with a dissociation constant of 0.18 nM. Active against perkinsin. Not active against thermolysin, papain or pepsin. In Crassostrea virginica (Eastern oyster), this protein is Serine protease inhibitor Cvsi-2.